The primary structure comprises 312 residues: Protein-glutamate methylesterase/protein-glutamine glutaminase (312 aa).

One can recognise a Response regulatory domain in the interval 5 to 122 (RVLSVDDSAL…REGMLAYSEM (118 aa)). Residue D56 is modified to 4-aspartylphosphate. Positions 152 to 307 (LLSSEKLIAI…QQMLAKISAG (156 aa)) constitute a CheB-type methylesterase domain. Residues S164, H190, and D249 contribute to the active site.

The protein belongs to the CheB family. Phosphorylated by CheA. Phosphorylation of the N-terminal regulatory domain activates the methylesterase activity.

It is found in the cytoplasm. The enzyme catalyses [protein]-L-glutamate 5-O-methyl ester + H2O = L-glutamyl-[protein] + methanol + H(+). It catalyses the reaction L-glutaminyl-[protein] + H2O = L-glutamyl-[protein] + NH4(+). In terms of biological role, involved in chemotaxis. Part of a chemotaxis signal transduction system that modulates chemotaxis in response to various stimuli. Catalyzes the demethylation of specific methylglutamate residues introduced into the chemoreceptors (methyl-accepting chemotaxis proteins or MCP) by CheR. Also mediates the irreversible deamidation of specific glutamine residues to glutamic acid. The polypeptide is Protein-glutamate methylesterase/protein-glutamine glutaminase (Shigella boydii serotype 4 (strain Sb227)).